The following is a 226-amino-acid chain: Lipoprotein-releasing system ATP-binding protein LolD (226 aa).

In terms of domain architecture, ABC transporter spans 5–225; sequence FALSNISKFF…EINSCMLSSV (221 aa). 40–47 provides a ligand contact to ATP; it reads GRSGSGKS.

It belongs to the ABC transporter superfamily. Lipoprotein translocase (TC 3.A.1.125) family. In terms of assembly, the complex is composed of two ATP-binding proteins (LolD) and two transmembrane proteins (LolC and LolE).

Its subcellular location is the cell inner membrane. Its function is as follows. Part of the ABC transporter complex LolCDE involved in the translocation of mature outer membrane-directed lipoproteins, from the inner membrane to the periplasmic chaperone, LolA. Responsible for the formation of the LolA-lipoprotein complex in an ATP-dependent manner. The protein is Lipoprotein-releasing system ATP-binding protein LolD of Ehrlichia canis (strain Jake).